Here is a 388-residue protein sequence, read N- to C-terminus: Probable serine/threonine-protein kinase PBL20 (388 aa).

Cysteine 3 is lipidated: S-palmitoyl cysteine. One can recognise a Protein kinase domain in the interval 91–372; sequence FSRKLKIGEG…FVVESLTNII (282 aa). Residues 97-105 and lysine 128 contribute to the ATP site; that span reads IGEGGFGSV. The Proton acceptor role is filled by aspartate 221.

Belongs to the protein kinase superfamily. Ser/Thr protein kinase family.

It is found in the cell membrane. It carries out the reaction L-seryl-[protein] + ATP = O-phospho-L-seryl-[protein] + ADP + H(+). The enzyme catalyses L-threonyl-[protein] + ATP = O-phospho-L-threonyl-[protein] + ADP + H(+). Functionally, may be involved in plant defense signaling. This is Probable serine/threonine-protein kinase PBL20 from Arabidopsis thaliana (Mouse-ear cress).